Consider the following 453-residue polypeptide: Tyrosine-protein phosphatase non-receptor type 18 (453 aa).

The Tyrosine-protein phosphatase domain maps to 26–291 (LAREFSDIKA…RFLYHTVAQL (266 aa)). Substrate-binding positions include Asp197, 229–235 (CSAGCGR), and Gln276. Cys229 serves as the catalytic Phosphocysteine intermediate. Phosphotyrosine occurs at positions 381 and 419. Residues 384-453 (VAPRAQRPVA…RDPPAEWTRV (70 aa)) form a disordered region. Positions 442–453 (GPRDPPAEWTRV) are enriched in basic and acidic residues.

The protein belongs to the protein-tyrosine phosphatase family. Non-receptor class 4 subfamily. Interacts with PSTPIP1. In terms of tissue distribution, highest expression in bone marrow. Also expressed in kidney, lung, ovary, spleen, thymus and lymph node.

It localises to the nucleus. The protein resides in the cytoplasm. It catalyses the reaction O-phospho-L-tyrosyl-[protein] + H2O = L-tyrosyl-[protein] + phosphate. May be involved in growth and differentiation of hematopoietic cells. This Mus musculus (Mouse) protein is Tyrosine-protein phosphatase non-receptor type 18 (Ptpn18).